A 286-amino-acid polypeptide reads, in one-letter code: Aquaporin NIP1-3 (286 aa).

The tract at residues 1–44 is disordered; the sequence is MAGGEHGVNGQHEETRAMEEGSRDHQARCENSEQDGGSKSSSNN. Over residues 11-31 the composition is skewed to basic and acidic residues; it reads QHEETRAMEEGSRDHQARCEN. Polar residues predominate over residues 34–44; that stretch reads QDGGSKSSSNN. Transmembrane regions (helical) follow at residues 56–76 and 84–104; these read VIAEILGTFFLIFAGCAAVAV and VTFPGICITWGLAVMVMVYSV. Positions 113–115 match the NPA 1 motif; that stretch reads NPA. 3 helical membrane passes run 131 to 153, 172 to 192, and 200 to 220; these read VPAYAAAQVAGSAAASAALRALF, SLAMEFIITFYLMFVVSGVAT, and LAGLAVGATVLVNVLFAGPIS. The NPA 2 signature appears at 225–227; that stretch reads NPA. Residues 239-259 traverse the membrane as a helical segment; that stretch reads YTGIWVYIAGPVFGAVAGAWA.

This sequence belongs to the MIP/aquaporin (TC 1.A.8) family. NIP (TC 1.A.8.12) subfamily.

It localises to the membrane. In terms of biological role, aquaporins facilitate the transport of water and small neutral solutes across cell membranes. In Oryza sativa subsp. japonica (Rice), this protein is Aquaporin NIP1-3 (NIP1-3).